Consider the following 235-residue polypeptide: REF/SRPP-like protein At2g47780 (235 aa).

A compositionally biased stretch (acidic residues) spans 1–12; sequence MAEDEIVVEEEQ. The segment at 1 to 32 is disordered; that stretch reads MAEDEIVVEEEQSQPQEITPVPPSSSSSPSLV.

Belongs to the REF/SRPP family.

This is REF/SRPP-like protein At2g47780 from Arabidopsis thaliana (Mouse-ear cress).